The following is a 338-amino-acid chain: MRVFYDKDCDLSIIQGKKVAIIGYGSQGHAHACNLKDSGVDVTVGLRSGSATVAKAEAHGLKVADVKSAVAAADVVMILTPDEFQGRLYKEEIEPNLKKGATLAFAHGFSIHYNQVVPRADLDVIMIAPKAPGHTVRSEFVKGGGIPDLIAIYQDASGNAKNVALSYACGVGGGRTGIIETTFKDETETDLFGEQAVLCGGCVELVKAGFETLVEAGYAPEMAYFECLHELKLIVDLMYEGGIANMNYSISNNAEYGEYVTGPEVINAESRAAMRNALKRIQDGEYAKMFITEGAANYPSMTAYRRNNAAHPIEQIGEKLRAMMPWIAANKIVDKSKN.

Positions 1 to 181 (MRVFYDKDCD…GGGRTGIIET (181 aa)) constitute a KARI N-terminal Rossmann domain. Residues 24 to 27 (YGSQ), Arg47, Ser50, Thr52, and 82 to 85 (DEFQ) contribute to the NADP(+) site. The active site involves His107. Gly133 serves as a coordination point for NADP(+). Residues 182-327 (TFKDETETDL…EKLRAMMPWI (146 aa)) enclose the KARI C-terminal knotted domain. Residues Asp190, Glu194, Glu226, and Glu230 each contribute to the Mg(2+) site. Ser251 contributes to the substrate binding site.

This sequence belongs to the ketol-acid reductoisomerase family. The cofactor is Mg(2+).

It catalyses the reaction (2R)-2,3-dihydroxy-3-methylbutanoate + NADP(+) = (2S)-2-acetolactate + NADPH + H(+). The enzyme catalyses (2R,3R)-2,3-dihydroxy-3-methylpentanoate + NADP(+) = (S)-2-ethyl-2-hydroxy-3-oxobutanoate + NADPH + H(+). The protein operates within amino-acid biosynthesis; L-isoleucine biosynthesis; L-isoleucine from 2-oxobutanoate: step 2/4. It functions in the pathway amino-acid biosynthesis; L-valine biosynthesis; L-valine from pyruvate: step 2/4. In terms of biological role, involved in the biosynthesis of branched-chain amino acids (BCAA). Catalyzes an alkyl-migration followed by a ketol-acid reduction of (S)-2-acetolactate (S2AL) to yield (R)-2,3-dihydroxy-isovalerate. In the isomerase reaction, S2AL is rearranged via a Mg-dependent methyl migration to produce 3-hydroxy-3-methyl-2-ketobutyrate (HMKB). In the reductase reaction, this 2-ketoacid undergoes a metal-dependent reduction by NADPH to yield (R)-2,3-dihydroxy-isovalerate. This chain is Ketol-acid reductoisomerase (NADP(+)), found in Pseudomonas paraeruginosa (strain DSM 24068 / PA7) (Pseudomonas aeruginosa (strain PA7)).